We begin with the raw amino-acid sequence, 538 residues long: Reticuline oxidase (538 aa).

Positions 1–23 (MENKTPIFFSLSIFLSLLNCALG) are cleaved as a signal peptide. C30 and C89 form a disulfide bridge. The N-linked (GlcNAc...) asparagine glycan is linked to N38. An FAD-binding PCMH-type domain is found at 67 to 241 (LISKPSAIIL…YAWKIKLLPV (175 aa)). A cross-link (6-(S-cysteinyl)-8alpha-(pros-histidyl)-FAD (His-Cys)) is located at residues 104-166 (HSYEGLSYTS…SKLGFTAGWC (63 aa)). N-linked (GlcNAc...) asparagine glycosylation is found at N423 and N471.

It belongs to the oxygen-dependent FAD-linked oxidoreductase family. Requires FAD as cofactor. A metal cation is required as a cofactor. The FAD cofactor is bound via a bicovalent 6-S-cysteinyl, 8alpha-N1-histidyl FAD linkage.

The protein localises to the cytoplasmic vesicle. The enzyme catalyses (S)-reticuline + O2 = (S)-scoulerine + H2O2 + H(+). The protein operates within alkaloid biosynthesis; (S)-scoulerine biosynthesis; (S)-scoulerine from (S)-reticuline: step 1/1. Essential to the formation of benzophenanthridine alkaloids in the response of plants to pathogenic attack. Catalyzes the stereospecific conversion of the N-methyl moiety of (S)-reticuline into the berberine bridge carbon of (S)-scoulerine. This Eschscholzia californica (California poppy) protein is Reticuline oxidase (BBE1).